Reading from the N-terminus, the 218-residue chain is Glutathione S-transferase Mu 2 (218 aa).

The region spanning 2-88 is the GST N-terminal domain; sequence PIILGYWNIR…YIARKHNLCG (87 aa). 7-8 is a binding site for glutathione; sequence YW. A phosphoserine mark is found at Ser27 and Ser44. Glutathione contacts are provided by residues 43-46, Lys50, 59-60, and 72-73; these read RSQW, NL, and QS. The GST C-terminal domain occupies 90-208; it reads TEKEKIQEDI…KSSRFLPRPV (119 aa). Residue Tyr116 coordinates substrate.

The protein belongs to the GST superfamily. Mu family. Homodimer.

It is found in the cytoplasm. The catalysed reaction is RX + glutathione = an S-substituted glutathione + a halide anion + H(+). It catalyses the reaction 11(S)-hydroxy-14(S),15(S)-epoxy-(5Z,8Z,12E)-eicosatrienoate + glutathione = (11S,15S)-dihydroxy-14(R)-S-glutathionyl-(5Z,8Z,12E)-eicosatrienoate. Its function is as follows. Conjugation of reduced glutathione to a wide number of exogenous and endogenous hydrophobic electrophiles. Participates in the formation of novel hepoxilin regioisomers. The protein is Glutathione S-transferase Mu 2 (GSTM2) of Pongo abelii (Sumatran orangutan).